A 192-amino-acid chain; its full sequence is Glycerol-3-phosphate acyltransferase (192 aa).

The next 5 membrane-spanning stretches (helical) occupy residues 4–24 (MFWL…AILL), 54–74 (LAIL…LIAS), 80–100 (IAQQ…PVYF), 112–132 (AGVL…AWLL), and 154–174 (LLAW…LLIV).

Belongs to the PlsY family. Probably interacts with PlsX.

The protein localises to the cell inner membrane. It catalyses the reaction an acyl phosphate + sn-glycerol 3-phosphate = a 1-acyl-sn-glycero-3-phosphate + phosphate. The protein operates within lipid metabolism; phospholipid metabolism. Its function is as follows. Catalyzes the transfer of an acyl group from acyl-phosphate (acyl-PO(4)) to glycerol-3-phosphate (G3P) to form lysophosphatidic acid (LPA). This enzyme utilizes acyl-phosphate as fatty acyl donor, but not acyl-CoA or acyl-ACP. This chain is Glycerol-3-phosphate acyltransferase, found in Pseudomonas syringae pv. syringae (strain B728a).